The sequence spans 307 residues: Major immediate early protein (307 aa).

The RING-type zinc finger occupies 39-92 (CAVCLETYCVQSNNIIDFLMPSECTHLFCYKCVLNMYKNAMNVPRAAVSCPMCN).

This is Major immediate early protein (PE38) from Orgyia pseudotsugata multicapsid polyhedrosis virus (OpMNPV).